A 960-amino-acid chain; its full sequence is ATPase 4, plasma membrane-type (960 aa).

Residues 1 to 69 (MTTTVEDNRE…EKKESKFLKF (69 aa)) are Cytoplasmic-facing. A helical membrane pass occupies residues 70–89 (LGFMWNPLSWVMEAAAIMAI). Residues 90–101 (ALANGGGKPPDW) lie on the Extracellular side of the membrane. A helical membrane pass occupies residues 102–122 (QDFVGIITLLVINSTISFIEE). Over 123 to 251 (NNAGNAAAAL…GHFQQVLTAI (129 aa)) the chain is Cytoplasmic. Residues 252-272 (GNFCICSIAVGMLIEIVVMYP) form a helical membrane-spanning segment. Over 273–281 (IQHRAYRPG) the chain is Extracellular. The helical transmembrane segment at 282-299 (IDNLLVLLIGGIPIAMPT) threads the bilayer. Topologically, residues 300-651 (VLSVTMAIGS…TSRAIFQRMK (352 aa)) are cytoplasmic. Aspartate 337 serves as the catalytic 4-aspartylphosphate intermediate. Residues aspartate 596 and aspartate 600 each coordinate Mg(2+). A helical membrane pass occupies residues 652–673 (NYTIYAVSITIRIVLGFMLLAL). The Extracellular segment spans residues 674–678 (IWQFD). Residues 679–701 (FPPFMVLIIAILNDGTIMTISKD) form a helical membrane-spanning segment. The Cytoplasmic segment spans residues 702–717 (RVKPSPLPDSWKLSEI). A helical transmembrane segment spans residues 718-738 (FATGVVFGSYMAMMTVIFFWV). The Extracellular portion of the chain corresponds to 739 to 763 (SYKTDFFPRTFGVATLEKTAHDDFR). A helical membrane pass occupies residues 764–784 (KLASAIYLQVSIISQALIFVT). Over 785 to 796 (RSRSWSFVERPG) the chain is Cytoplasmic. A helical membrane pass occupies residues 797–817 (IFLMIAFILAQLVATLIAVYA). Residues 818 to 825 (NWSFAAIE) are Extracellular-facing. A helical transmembrane segment spans residues 826–846 (GIGWGWAGVIWLYNIIFYIPL). Residues 847 to 960 (DFIKFFIRYA…IETIQQAYTV (114 aa)) are Cytoplasmic-facing. Threonine 893 carries the phosphothreonine modification. Phosphoserine is present on serine 942. Residues 958–960 (YTV) form an interaction with 14-3-3 proteins region. Threonine 959 carries the post-translational modification Phosphothreonine.

It belongs to the cation transport ATPase (P-type) (TC 3.A.3) family. Type IIIA subfamily. Binds to 14-3-3 proteins. The binding is induced by phosphorylation of Thr-959. Binding to 14-3-3 proteins activates the H(+)-ATPase. In terms of tissue distribution, expressed in guard cells and roots.

It localises to the cell membrane. The enzyme catalyses ATP + H2O + H(+)(in) = ADP + phosphate + 2 H(+)(out). Functionally, the plasma membrane H(+) ATPase of plants and fungi generates a proton gradient that drives the active transport of nutrients by H(+)-symport. The resulting external acidification and/or internal alkinization may mediate growth responses. The protein is ATPase 4, plasma membrane-type (AHA4) of Arabidopsis thaliana (Mouse-ear cress).